A 267-amino-acid polypeptide reads, in one-letter code: tRNA (guanine-N(1)-)-methyltransferase (267 aa).

S-adenosyl-L-methionine-binding positions include Gly119 and 139-144 (IGDYVL).

This sequence belongs to the RNA methyltransferase TrmD family. In terms of assembly, homodimer.

The protein resides in the cytoplasm. The enzyme catalyses guanosine(37) in tRNA + S-adenosyl-L-methionine = N(1)-methylguanosine(37) in tRNA + S-adenosyl-L-homocysteine + H(+). Specifically methylates guanosine-37 in various tRNAs. The sequence is that of tRNA (guanine-N(1)-)-methyltransferase from Chromohalobacter salexigens (strain ATCC BAA-138 / DSM 3043 / CIP 106854 / NCIMB 13768 / 1H11).